The chain runs to 471 residues: (13S,14R)-1,13-dihydroxy-N-methylcanadine 13-O-acetyltransferase AT1 (471 aa).

The protein belongs to the plant acyltransferase family.

The catalysed reaction is (13S,14R)-1,13-dihydroxy-N-methylcanadine + acetyl-CoA = (13S,14R)-13-O-acetyl-1-hydroxy-N-methylcanadine + CoA. It functions in the pathway alkaloid biosynthesis. Functionally, acetyltransferase involved in the biosynthesis of the benzylisoquinoline alkaloid noscapine. Converts (13S,14R)-1,13-dihydroxy-N-methylcanadine to (13S,14R)-13-O-acetyl-1-hydroxy-N-methylcanadine. The polypeptide is (13S,14R)-1,13-dihydroxy-N-methylcanadine 13-O-acetyltransferase AT1 (Papaver somniferum (Opium poppy)).